Consider the following 258-residue polypeptide: NAD kinase (258 aa).

D51 serves as the catalytic Proton acceptor. NAD(+)-binding positions include 51–52 (DG), K56, 119–120 (ND), K130, D149, 160–165 (TAYSLS), and A184.

This sequence belongs to the NAD kinase family. A divalent metal cation serves as cofactor.

It localises to the cytoplasm. The enzyme catalyses NAD(+) + ATP = ADP + NADP(+) + H(+). Functionally, involved in the regulation of the intracellular balance of NAD and NADP, and is a key enzyme in the biosynthesis of NADP. Catalyzes specifically the phosphorylation on 2'-hydroxyl of the adenosine moiety of NAD to yield NADP. In Thermotoga sp. (strain RQ2), this protein is NAD kinase.